Reading from the N-terminus, the 67-residue chain is Small ribosomal subunit protein bS21 (67 aa).

Belongs to the bacterial ribosomal protein bS21 family.

This is Small ribosomal subunit protein bS21 from Hydrogenobaculum sp. (strain Y04AAS1).